A 108-amino-acid chain; its full sequence is Parvalbumin beta 2 (108 aa).

At A1 the chain carries N-acetylalanine. 2 EF-hand domains span residues 38–73 and 77–108; these read KSAA…FSAG and LTDA…MVKG. Ca(2+) contacts are provided by D51, D53, S55, F57, E59, E62, D90, D92, D94, K96, and E101.

It belongs to the parvalbumin family.

In terms of biological role, in muscle, parvalbumin is thought to be involved in relaxation after contraction. It binds two calcium ions. The polypeptide is Parvalbumin beta 2 (Merluccius bilinearis (Silver hake)).